The chain runs to 396 residues: Subtilisin-like protease 5 (396 aa).

The signal sequence occupies residues 1–20 (MTGFFTILSFSLAALSVTNA). Positions 21–116 (AQILSVPKGA…VEPDAIISQH (96 aa)) are excised as a propeptide. An Inhibitor I9 domain is found at 37–113 (YIVVMKDDTS…VAFVEPDAII (77 aa)). One can recognise a Peptidase S8 domain in the interval 125–396 (PWGLSRLSNR…SRLLYNGSGR (272 aa)). Active-site charge relay system residues include Asp156 and His187. N-linked (GlcNAc...) asparagine glycosylation is found at Asn230 and Asn248. The Charge relay system role is filled by Ser342. Positions 376 to 389 (PTIRNPGPDTTSRL) are enriched in polar residues. The tract at residues 376-396 (PTIRNPGPDTTSRLLYNGSGR) is disordered. N-linked (GlcNAc...) asparagine glycosylation occurs at Asn392.

Belongs to the peptidase S8 family.

It is found in the secreted. Functionally, secreted subtilisin-like serine protease with keratinolytic activity that contributes to pathogenicity. This chain is Subtilisin-like protease 5 (SUB5), found in Arthroderma benhamiae (strain ATCC MYA-4681 / CBS 112371) (Trichophyton mentagrophytes).